We begin with the raw amino-acid sequence, 541 residues long: Glucose-6-phosphate isomerase (541 aa).

Glu346 functions as the Proton donor in the catalytic mechanism. Active-site residues include His377 and Lys506.

It belongs to the GPI family.

Its subcellular location is the cytoplasm. The catalysed reaction is alpha-D-glucose 6-phosphate = beta-D-fructose 6-phosphate. It participates in carbohydrate biosynthesis; gluconeogenesis. The protein operates within carbohydrate degradation; glycolysis; D-glyceraldehyde 3-phosphate and glycerone phosphate from D-glucose: step 2/4. Functionally, catalyzes the reversible isomerization of glucose-6-phosphate to fructose-6-phosphate. The sequence is that of Glucose-6-phosphate isomerase from Rhizobium leguminosarum bv. trifolii (strain WSM2304).